Reading from the N-terminus, the 64-residue chain is Large ribosomal subunit protein bL33 (64 aa).

The protein belongs to the bacterial ribosomal protein bL33 family.

This Parasynechococcus marenigrum (strain WH8102) protein is Large ribosomal subunit protein bL33.